The chain runs to 734 residues: Sulfate transporter (734 aa).

A compositionally biased stretch (basic and acidic residues) spans 1-18 (MSLKNEDQNDLSPKDSVK). The tract at residues 1–38 (MSLKNEDQNDLSPKDSVKGNDQYRAPSGIHLEPEEESR) is disordered. Phosphoserine occurs at positions 12 and 16. 2 consecutive transmembrane segments (helical) span residues 113 to 133 (VMSG…YSLL) and 138 to 158 (PIYG…LGTS). Asn194 carries an N-linked (GlcNAc...) asparagine glycan. A run of 6 helical transmembrane segments spans residues 214–234 (IIVG…MGFF), 237–257 (GFVS…GASF), 379–399 (VDAI…SEMF), 415–435 (AIGF…SAAL), 453–473 (VMTA…FFSL), and 519–539 (LIST…CVIL). The STAS domain maps to 563–714 (AYKNLQAKSG…YSIYEAMTFA (152 aa)).

It belongs to the SLC26A/SulP transporter (TC 2.A.53) family. Post-translationally, N-glycosylated.

The protein localises to the cell membrane. It localises to the apical cell membrane. The enzyme catalyses oxalate(in) + sulfate(out) = oxalate(out) + sulfate(in). The catalysed reaction is sulfate(out) + 2 chloride(in) = sulfate(in) + 2 chloride(out). It catalyses the reaction oxalate(out) + 2 chloride(in) = oxalate(in) + 2 chloride(out). It carries out the reaction bromide(in) + chloride(out) = bromide(out) + chloride(in). The enzyme catalyses nitrate(in) + chloride(out) = nitrate(out) + chloride(in). The catalysed reaction is iodide(in) + chloride(out) = iodide(out) + chloride(in). Sulfate transporter which mediates sulfate uptake into chondrocytes in order to maintain adequate sulfation of proteoglycans which is needed for cartilage development. Mediates electroneutral anion exchange of sulfate ions for oxalate ions, sulfate and oxalate ions for chloride and/or hydroxyl ions and chloride ions for bromide, iodide and nitrate ions. The coupling of sulfate transport to both hydroxyl and chloride ions likely serves to ensure transport at both acidic pH when most sulfate uptake is mediated by sulfate-hydroxide exchange and alkaline pH when most sulfate uptake is mediated by sulfate-chloride exchange. Essential for chondrocyte proliferation, differentiation and cell size expansion. This chain is Sulfate transporter (SLC26A2), found in Bos taurus (Bovine).